The sequence spans 403 residues: MGELSMQEMPLPALFEQGSKIHASAESSVDQDTVRKGCEILRQCEEMIGKLGLFSVNETKEDISTANLKYILVPYYLAELTEKVADNDRIKVLKASQAKLKEFISFCETMELVPEEEIETSTQGGANSSVDRRAKKIARFKRQRAAESKLLEIKERKERRGRSTKAAALSSPVETEEDDVLDDDGEEEREAWLTTISLGLCKAFDLLEMLKKEEEILSAVKEKQLQNGEKEFSQAILDERTKKVETWHRDAAARAHYTKPAAPITCATFAQDVIEGRAKVSQAHEHKHQPLIFGPASLVGRNPTTEREKIAAQVFQPHYRLPTMSIEEAGLTEMNMMNEWQERNVKLMEEANSSWYKDAPKSRPGEDDEEDDDDAAQDKARAWDDWKDDNPRGAGNKKLTPCG.

Disordered stretches follow at residues 158-184 (ERRG…LDDD) and 351-403 (ANSS…TPCG). Acidic residues-rich tracts occupy residues 174–184 (ETEEDDVLDDD) and 366–375 (EDDEEDDDDA). Positions 376-391 (AQDKARAWDDWKDDNP) are enriched in basic and acidic residues.

This sequence belongs to the IGBP1/TAP42 family. In terms of assembly, interacts with NPP4 and NPP5, two catalytic subunits (subunit C) of PP2A.

It is found in the cytoplasm. Its subcellular location is the nucleus. In terms of biological role, involved in the regulation of the TOR signaling pathway. Seems to act as a regulator of PP2A catalytic activity. The sequence is that of PP2A regulatory subunit TAP46 from Nicotiana benthamiana.